The chain runs to 908 residues: Mechanosensitive ion channel protein 8 (908 aa).

A compositionally biased stretch (polar residues) spans 1–25 (MDFRNSFKSHSSYKQIRSPGDQSEP). Disordered regions lie at residues 1-88 (MDFR…HTAV), 148-172 (DQEN…SFDA), 190-221 (VAGS…LQEE), and 242-265 (VKTR…WRSG). Positions 31–70 (PILHDHHPDHSGMVVDDQKPDSTRSSLDDGRNAPVERDAS) are enriched in basic and acidic residues. Composition is skewed to polar residues over residues 75–85 (QDNTTGTSTDH) and 156–171 (HQTM…TSFD). Residues 196-206 (SSSSHSSSSSS) show a composition bias toward low complexity. The span at 207 to 218 (ATMRTNQDQPQL) shows a compositional bias: polar residues. The segment covering 247–256 (RLQDPPREEE) has biased composition (basic and acidic residues). 6 consecutive transmembrane segments (helical) span residues 298-318 (AITL…ACSL), 341-361 (LVLI…VFFI), 381-401 (AVQN…LFDK), 411-431 (FLPY…LWLI), 673-693 (MINI…LEIA), and 709-729 (AFIF…LFIV).

The protein belongs to the MscS (TC 1.A.23) family. In terms of tissue distribution, expressed in tricellular and mature pollen, and in germinating tube. Not detected in leaves or roots.

The protein resides in the cell membrane. The protein localises to the endomembrane system. Not regulated by MgCl(2), ruthenium red or tetramethylammonium-Cl. Its function is as follows. Mechanosensitive channel that opens in response to stretch forces in the membrane lipid bilayer. Exhibits a 6.3-fold preference for chloride over sodium. Regulates osmotic forces during pollen hydration and germination. This Arabidopsis thaliana (Mouse-ear cress) protein is Mechanosensitive ion channel protein 8.